We begin with the raw amino-acid sequence, 229 residues long: MDYLEWRHVFRLDPAKDISDEDLEKICESGTDVILVGGTDNVTLDGVLDLLVRVRRFEVPIALEISTIDAITPGYDYYFIPTVLNSDDPKWIKNLHHAAIKEFGDIMVWDELVAEGYCILNPDCKVAHVTGATTDLSIDDIVAYARMAENFFKLPVFYLEYSGIYGNPEVVSAVKNELKHTKLFYGGGITSAKQAEEMAQYADTVVVGNIIYEDLKAALATVKAVKNTL.

Mg(2+) is bound by residues D13 and T39.

This sequence belongs to the GGGP/HepGP synthase family. Homodimer. Requires Mg(2+) as cofactor.

The catalysed reaction is sn-glycerol 1-phosphate + all-trans-heptaprenyl diphosphate = 3-heptaprenyl-sn-glycero-1-phosphate + diphosphate. It participates in membrane lipid metabolism; glycerophospholipid metabolism. Its function is as follows. Prenyltransferase that catalyzes in vivo the transfer of the heptaprenyl moiety of heptaprenyl pyrophosphate (HepPP; 35 carbon atoms) to the C3 hydroxyl of sn-glycerol-1-phosphate (G1P), producing heptaprenylglyceryl phosphate (HepGP). This reaction is an ether-bond-formation step in the biosynthesis of archaea-type G1P-based membrane lipids found in Bacillales. This chain is Heptaprenylglyceryl phosphate synthase, found in Lysinibacillus sphaericus (strain C3-41).